The primary structure comprises 197 residues: Imidazoleglycerol-phosphate dehydratase (197 aa).

The protein belongs to the imidazoleglycerol-phosphate dehydratase family.

The protein resides in the cytoplasm. The catalysed reaction is D-erythro-1-(imidazol-4-yl)glycerol 3-phosphate = 3-(imidazol-4-yl)-2-oxopropyl phosphate + H2O. The protein operates within amino-acid biosynthesis; L-histidine biosynthesis; L-histidine from 5-phospho-alpha-D-ribose 1-diphosphate: step 6/9. The chain is Imidazoleglycerol-phosphate dehydratase from Bradyrhizobium diazoefficiens (strain JCM 10833 / BCRC 13528 / IAM 13628 / NBRC 14792 / USDA 110).